The sequence spans 1503 residues: Chromosome partition protein MukB (1503 aa).

Positions 1–19 are enriched in polar residues; the sequence is MMNTNELFDQTAVNSSQDK. The disordered stretch occupies residues 1 to 21; sequence MMNTNELFDQTAVNSSQDKPL. ATP is bound at residue 65–72; it reads GGNGAGKS. Coiled-coil stretches lie at residues 370-495, 536-616, 662-697, 865-1173, and 1238-1293; these read MNAL…QRLS, DQKM…HRQQ, MQEM…SQAD, EMLM…SAEE, and DAIE…LQNI. The flexible hinge stretch occupies residues 696-813; the sequence is ADGAEDIRLN…EVPLFGRAAR (118 aa).

Belongs to the SMC family. MukB subfamily. Homodimerization via its hinge domain. Binds to DNA via its C-terminal region. Interacts, and probably forms a ternary complex, with MukE and MukF via its C-terminal region. The complex formation is stimulated by calcium or magnesium. Interacts with tubulin-related protein FtsZ.

It localises to the cytoplasm. Its subcellular location is the nucleoid. Functionally, plays a central role in chromosome condensation, segregation and cell cycle progression. Functions as a homodimer, which is essential for chromosome partition. Involved in negative DNA supercoiling in vivo, and by this means organize and compact chromosomes. May achieve or facilitate chromosome segregation by condensation DNA from both sides of a centrally located replisome during cell division. The chain is Chromosome partition protein MukB from Haemophilus ducreyi (strain 35000HP / ATCC 700724).